We begin with the raw amino-acid sequence, 261 residues long: Ribosome biogenesis protein C3_06160C_A (261 aa).

Residues 1 to 38 (MPQNEYIEQHIKKHGRRLDYEERKRKKEAREGHRVAKD) are disordered. Short sequence motifs (nuclear localization signal) lie at residues 11–18 (IKKHGRRL) and 51–58 (AKKRYAEK). Residues 17–37 (RLDYEERKRKKEAREGHRVAK) are compositionally biased toward basic and acidic residues. A disordered region spans residues 59-85 (VAMKKKIKAHQESKVKGPSTPKAEDGE).

The protein belongs to the eukaryotic ribosomal protein eS8 family. Ribosome biogenesis protein NSA2 subfamily. As to quaternary structure, component of the pre-66S ribosomal particle. Interacts with NOP7 and RRP1. Interacts with RSA4 (via WD repeats).

The protein localises to the nucleus. Its subcellular location is the nucleolus. In terms of biological role, involved in the biogenesis of the 60S ribosomal subunit. May play a part in the quality control of pre-60S particles. This is Ribosome biogenesis protein C3_06160C_A from Candida albicans (strain SC5314 / ATCC MYA-2876) (Yeast).